We begin with the raw amino-acid sequence, 146 residues long: Hemoglobin subunit beta (146 aa).

The region spanning 2–146 is the Globin domain; sequence HWTAEEKQLI…VAHALARKYH (145 aa). Residues His63 and His92 each coordinate heme b.

The protein belongs to the globin family. As to quaternary structure, heterotetramer of two alpha chains and two beta chains. As to expression, red blood cells.

Functionally, involved in oxygen transport from the lung to the various peripheral tissues. This is Hemoglobin subunit beta (HBB) from Aegypius monachus (Cinereous vulture).